The sequence spans 507 residues: L-amino-acid oxidase (507 aa).

A signal peptide spans 1–19 (MNVLFIFSLLFLAALESCA). A disulfide bridge links C29 with C192. FAD is bound by residues 62 to 63 (MA), 82 to 83 (EA), R90, and 106 to 109 (GPMR). R109 lines the substrate pocket. N191 and N213 each carry an N-linked (GlcNAc...) asparagine glycan. V280 serves as a coordination point for FAD. C348 and C429 are disulfide-bonded. N378 carries N-linked (GlcNAc...) asparagine glycosylation. Y389 contributes to the substrate binding site. FAD is bound by residues E473 and 480–485 (GWIDST).

Belongs to the flavin monoamine oxidase family. FIG1 subfamily. As to quaternary structure, homodimer; non-covalently linked. The cofactor is FAD. Expressed by the venom gland.

It localises to the secreted. It catalyses the reaction an L-alpha-amino acid + O2 + H2O = a 2-oxocarboxylate + H2O2 + NH4(+). It carries out the reaction L-leucine + O2 + H2O = 4-methyl-2-oxopentanoate + H2O2 + NH4(+). Catalyzes an oxidative deamination of predominantly hydrophobic and aromatic L-amino acids, thus producing hydrogen peroxide that may contribute to the diverse toxic effects of this enzyme. Shows activity on L-Leu. Exhibits diverse biological activities, such as hemorrhage, hemolysis, edema, apoptosis of vascular endothelial cells or tumor cell lines, antibacterial and antiparasitic activities. This protein induces platelet aggregation by both hydrogen peroxide production and binding to platelet membrane proteins (that would enhance the sensitivity of platelets to hydrogen peroxide). Effects of snake L-amino oxidases on platelets are controversial, since they either induce aggregation or inhibit agonist-induced aggregation. These different effects are probably due to different experimental conditions. This Naja atra (Chinese cobra) protein is L-amino-acid oxidase.